The following is a 207-amino-acid chain: MFSFLKKPTPEELVKKWKRELRREDRGLDTQLRAIDMQEKKTVRMIKERVKAGDQKSAKTLAKEIVNSRKAKERIYTAKAQMNSVSMQLQSNLAMTKVQGNLAKSTEIMKMMNDLIKLPELNKVMMAMGSEMTKAGIMEEMISDVFDMQGEDLEEEAEMEVNKIMDEILVSGPQVSSAPLETHQQEEVVQEKQEDSELLDRLKALKS.

The tract at residues 174–207 (QVSSAPLETHQQEEVVQEKQEDSELLDRLKALKS) is disordered. Positions 183 to 207 (HQQEEVVQEKQEDSELLDRLKALKS) form a coiled coil. Positions 183-207 (HQQEEVVQEKQEDSELLDRLKALKS) are enriched in basic and acidic residues.

This sequence belongs to the SNF7 family. In terms of assembly, probable core component of the endosomal sorting required for transport complex III (ESCRT-III).

The protein localises to the endosome membrane. In terms of biological role, probable core component of the endosomal sorting required for transport complex III (ESCRT-III) which is involved in multivesicular bodies (MVBs) formation and sorting of endosomal cargo proteins into MVBs. MVBs contain intraluminal vesicles (ILVs) that are generated by invagination and scission from the limiting membrane of the endosome and are delivered to lysosomes enabling degradation of membrane proteins. The chain is Charged multivesicular body protein 3 (chmp3) from Dictyostelium discoideum (Social amoeba).